Here is a 322-residue protein sequence, read N- to C-terminus: Olfactory receptor 11L1 (322 aa).

The Extracellular portion of the chain corresponds to 1-25; sequence MEPQNTSTVTNFQLLGFQNLLEWQA. Asn-5 carries an N-linked (GlcNAc...) asparagine glycan. The chain crosses the membrane as a helical span at residues 26–46; it reads LLFVIFLLIYCLTIIGNVVII. Residues 47-54 are Cytoplasmic-facing; sequence TVVSQGLR. Residues 55–75 traverse the membrane as a helical segment; that stretch reads LHSPMYMFLQHLSFLEVWYTS. The Extracellular portion of the chain corresponds to 76–99; the sequence is TTVPLLLANLLSWGQAISFSACMA. A disulfide bridge links Cys-97 with Cys-189. A helical transmembrane segment spans residues 100–120; it reads QLYFFVFLGATECFLLAFMAY. Topologically, residues 121 to 139 are cytoplasmic; that stretch reads DRYLAICSPLRYPFLMHRG. A helical transmembrane segment spans residues 140–160; it reads LCARLVVVSWCTGVSTGFLPS. The Extracellular portion of the chain corresponds to 161–197; that stretch reads LMISRLDFCGRNQINHFFCDLPPLMQLSCSRVYITEV. The chain crosses the membrane as a helical span at residues 198 to 217; the sequence is TIFILSIAVLCICFFLTLGP. Topologically, residues 218-237 are cytoplasmic; sequence YVFIVSSILRIPSTSGRRKT. The chain crosses the membrane as a helical span at residues 238–258; that stretch reads FSTCGSHLAVVTLYYGTMISM. The Extracellular segment spans residues 259-271; that stretch reads YVCPSPHLLPEIN. Residues 272–292 traverse the membrane as a helical segment; that stretch reads KIISVFYTVVTPLLNPVIYSL. The Cytoplasmic segment spans residues 293-322; sequence RNKDFKEAVRKVMRRKCGILWSTSKRKFLY.

The protein belongs to the G-protein coupled receptor 1 family.

The protein localises to the cell membrane. Functionally, odorant receptor. The chain is Olfactory receptor 11L1 (OR11L1) from Homo sapiens (Human).